A 602-amino-acid chain; its full sequence is uncharacterized protein (602 aa).

Belongs to the IIV-6 098R family.

This is an uncharacterized protein from Acheta domesticus (House cricket).